We begin with the raw amino-acid sequence, 436 residues long: Cytokine receptor-like factor 3 (436 aa).

Residues 9–87 adopt a coiled-coil conformation; that stretch reads LMQEAWESID…VSAIEQENIK (79 aa). The region spanning 177-270 is the Fibronectin type-III domain; the sequence is PPVQIEELIE…LQTSRTTLVP (94 aa).

This sequence belongs to the cytokine receptor-like factor 3 family.

Its subcellular location is the cytoplasm. Its function is as follows. May play a role in the negative regulation of cell cycle progression. The sequence is that of Cytokine receptor-like factor 3 (crlf3) from Xenopus laevis (African clawed frog).